We begin with the raw amino-acid sequence, 139 residues long: Transcription antitermination protein NusB (139 aa).

It belongs to the NusB family.

Its function is as follows. Involved in transcription antitermination. Required for transcription of ribosomal RNA (rRNA) genes. Binds specifically to the boxA antiterminator sequence of the ribosomal RNA (rrn) operons. This Escherichia fergusonii (strain ATCC 35469 / DSM 13698 / CCUG 18766 / IAM 14443 / JCM 21226 / LMG 7866 / NBRC 102419 / NCTC 12128 / CDC 0568-73) protein is Transcription antitermination protein NusB.